The sequence spans 238 residues: 1-(5-phosphoribosyl)-5-[(5-phosphoribosylamino)methylideneamino] imidazole-4-carboxamide isomerase (238 aa).

Aspartate 8 serves as the catalytic Proton acceptor. The active-site Proton donor is aspartate 129.

It belongs to the HisA/HisF family.

Its subcellular location is the cytoplasm. It catalyses the reaction 1-(5-phospho-beta-D-ribosyl)-5-[(5-phospho-beta-D-ribosylamino)methylideneamino]imidazole-4-carboxamide = 5-[(5-phospho-1-deoxy-D-ribulos-1-ylimino)methylamino]-1-(5-phospho-beta-D-ribosyl)imidazole-4-carboxamide. Its pathway is amino-acid biosynthesis; L-histidine biosynthesis; L-histidine from 5-phospho-alpha-D-ribose 1-diphosphate: step 4/9. The protein is 1-(5-phosphoribosyl)-5-[(5-phosphoribosylamino)methylideneamino] imidazole-4-carboxamide isomerase of Myxococcus xanthus (strain DK1622).